Here is a 302-residue protein sequence, read N- to C-terminus: 4-hydroxy-tetrahydrodipicolinate synthase (302 aa).

Residue threonine 57 coordinates pyruvate. Tyrosine 145 acts as the Proton donor/acceptor in catalysis. The active-site Schiff-base intermediate with substrate is lysine 173. Position 213 (isoleucine 213) interacts with pyruvate.

The protein belongs to the DapA family. As to quaternary structure, homotetramer; dimer of dimers.

It is found in the cytoplasm. The enzyme catalyses L-aspartate 4-semialdehyde + pyruvate = (2S,4S)-4-hydroxy-2,3,4,5-tetrahydrodipicolinate + H2O + H(+). It functions in the pathway amino-acid biosynthesis; L-lysine biosynthesis via DAP pathway; (S)-tetrahydrodipicolinate from L-aspartate: step 3/4. Functionally, catalyzes the condensation of (S)-aspartate-beta-semialdehyde [(S)-ASA] and pyruvate to 4-hydroxy-tetrahydrodipicolinate (HTPA). This is 4-hydroxy-tetrahydrodipicolinate synthase from Mycolicibacterium gilvum (strain PYR-GCK) (Mycobacterium gilvum (strain PYR-GCK)).